The primary structure comprises 164 residues: Large ribosomal subunit protein uL10 (164 aa).

This sequence belongs to the universal ribosomal protein uL10 family. As to quaternary structure, part of the ribosomal stalk of the 50S ribosomal subunit. The N-terminus interacts with L11 and the large rRNA to form the base of the stalk. The C-terminus forms an elongated spine to which L12 dimers bind in a sequential fashion forming a multimeric L10(L12)X complex.

In terms of biological role, forms part of the ribosomal stalk, playing a central role in the interaction of the ribosome with GTP-bound translation factors. This is Large ribosomal subunit protein uL10 (rplJ) from Helicobacter pylori (strain ATCC 700392 / 26695) (Campylobacter pylori).